The sequence spans 56 residues: UPF0434 protein Ecaj_0131 (56 aa).

This sequence belongs to the UPF0434 family.

The sequence is that of UPF0434 protein Ecaj_0131 from Ehrlichia canis (strain Jake).